A 73-amino-acid polypeptide reads, in one-letter code: Defensin-like protein 6 (73 aa).

A signal peptide spans 1 to 26 (MENKFFAAFFLLLVLFSSQEIIGGEG). 4 disulfide bridges follow: Cys29–Cys73, Cys40–Cys60, Cys46–Cys67, and Cys50–Cys69.

The protein belongs to the DEFL family.

The protein localises to the secreted. Functionally, confers broad-spectrum resistance to pathogens. The chain is Defensin-like protein 6 (PDF2.5) from Arabidopsis thaliana (Mouse-ear cress).